Here is a 4545-residue protein sequence, read N- to C-terminus: Prolow-density lipoprotein receptor-related protein 1 (4545 aa).

A signal peptide spans 1–19; sequence MLTPPLLLLLPLLSALVSG. Residues 20–4424 lie on the Extracellular side of the membrane; that stretch reads ATMDAPKTCS…SQQQPGHMAS (4405 aa). LDL-receptor class A domains follow at residues 26–67 and 71–111; these read KTCS…ICPQ and QRCP…HCRE. 6 disulfides stabilise this stretch: Cys-28-Cys-41, Cys-35-Cys-54, Cys-48-Cys-65, Cys-73-Cys-86, Cys-80-Cys-99, and Cys-93-Cys-109. The 39-residue stretch at 112–150 folds into the EGF-like 1 domain; it reads LRANCSRMGCQHHCVPTPSGPTCYCNSSFQLQADGKTCK. A glycan (N-linked (GlcNAc...) asparagine) is linked at Asn-115. 6 cysteine pairs are disulfide-bonded: Cys-116-Cys-125, Cys-121-Cys-134, Cys-136-Cys-149, Cys-155-Cys-165, Cys-161-Cys-174, and Cys-176-Cys-189. An N-linked (GlcNAc...) asparagine glycan is attached at Asn-137. An EGF-like 2; calcium-binding domain is found at 151–190; sequence DFDECSVYGTCSQLCTNTDGSFTCGCVEGYLLQPDNRSCK. N-linked (GlcNAc...) asparagine glycans are attached at residues Asn-186, Asn-240, and Asn-275. 3 LDL-receptor class B repeats span residues 293-335, 336-379, and 380-423; these read GNFY…DPAM, GKVF…DLVS, and RLVY…FENY. N-linked (GlcNAc...) asparagine glycosylation occurs at Asn-358. Asn-447 is a glycosylation site (N-linked (GlcNAc...) asparagine). One can recognise an EGF-like 3 domain in the interval 475–521; it reads RSHACENDQYGKPGGCSDICLLANSHKARTCRCRSGFSLGSDGKSCK. 3 disulfides stabilise this stretch: Cys-479–Cys-494, Cys-490–Cys-505, and Cys-507–Cys-520. LDL-receptor class B repeat units follow at residues 572-614, 615-660, 661-711, and 712-755; these read GFIY…DWMG, DNLY…DPLN, GWMY…DIPA, and GRLY…HGNY. An N-linked (GlcNAc...) asparagine glycan is attached at Asn-730. One can recognise an EGF-like 4 domain in the interval 804 to 844; the sequence is GTNKCRVNNGGCSSLCLATPGSRQCACAEDQVLDTDGVTCL. 33 disulfide bridges follow: Cys-808-Cys-819, Cys-815-Cys-828, Cys-830-Cys-843, Cys-855-Cys-867, Cys-862-Cys-880, Cys-874-Cys-891, Cys-896-Cys-908, Cys-903-Cys-921, Cys-915-Cys-932, Cys-937-Cys-949, Cys-944-Cys-962, Cys-956-Cys-972, Cys-977-Cys-990, Cys-985-Cys-1003, Cys-997-Cys-1012, Cys-1016-Cys-1028, Cys-1023-Cys-1041, Cys-1035-Cys-1052, Cys-1063-Cys-1076, Cys-1070-Cys-1089, Cys-1083-Cys-1098, Cys-1105-Cys-1119, Cys-1113-Cys-1132, Cys-1126-Cys-1141, Cys-1146-Cys-1160, Cys-1153-Cys-1173, Cys-1167-Cys-1183, Cys-1186-Cys-1197, Cys-1193-Cys-1207, Cys-1209-Cys-1222, Cys-1228-Cys-1238, Cys-1234-Cys-1247, and Cys-1249-Cys-1262. 8 consecutive LDL-receptor class A domains span residues 853–893, 894–934, 935–974, 975–1014, 1014–1054, 1061–1100, 1103–1143, and 1144–1183; these read PQCQ…LCHQ, HTCP…TCSA, RTCP…SCAY, PTCF…GCSH, HSCS…NCTN, GGCH…SCEG, HVCD…NCEA, and LACR…GELC. Residues Trp-872, Asp-875, Asp-877, Asp-879, Asp-885, and Glu-886 each coordinate Ca(2+). Asn-929 is a glycosylation site (N-linked (GlcNAc...) asparagine). The Ca(2+) site is built by Trp-1033, Asp-1036, Asp-1038, Asp-1040, Asp-1046, and Glu-1047. A glycan (N-linked (GlcNAc...) asparagine) is linked at Asn-1051. Trp-1081, Asp-1084, Asp-1086, Asp-1088, Asp-1094, and Glu-1095 together coordinate Ca(2+). Asn-1155 and Asn-1156 each carry an N-linked (GlcNAc...) asparagine glycan. EGF-like domains lie at 1184 to 1223 and 1224 to 1263; these read DQCS…HTCQ and IQSY…ESCR. Residues Asn-1196 and Asn-1219 are each glycosylated (N-linked (GlcNAc...) asparagine). LDL-receptor class B repeat units follow at residues 1310-1356, 1357-1399, 1400-1446, 1447-1491, and 1492-1532; these read SALY…DWIA, GNIY…DPRD, GILF…DYLE, KRIL…YGGE, and VYWT…YHPS. Residue Asn-1512 is glycosylated (N-linked (GlcNAc...) asparagine). In terms of domain architecture, EGF-like 7 spans 1537–1580; the sequence is APNPCEANGGRGPCSHLCLINYNRTVSCACPHLMKLHKDNTTCY. 3 disulfides stabilise this stretch: Cys-1541-Cys-1554, Cys-1550-Cys-1564, and Cys-1566-Cys-1579. 4 N-linked (GlcNAc...) asparagine glycosylation sites follow: Asn-1559, Asn-1576, Asn-1617, and Asn-1646. LDL-receptor class B repeat units follow at residues 1628-1670, 1671-1714, 1715-1754, and 1755-1799; these read QRVY…DWVS, RNLF…HPLR, GKLY…DFPE, and SKLY…MGDK. N-linked (GlcNAc...) asparagine glycosylation is found at Asn-1724, Asn-1734, Asn-1764, and Asn-1826. In terms of domain architecture, EGF-like 8 spans 1847–1888; it reads GTNPCSVNNGDCSQLCLPTSETTRSCMCTAGYSLRSGQQACE. Intrachain disulfides connect Cys-1851-Cys-1862, Cys-1858-Cys-1872, and Cys-1874-Cys-1887. Asn-1934 carries an N-linked (GlcNAc...) asparagine glycan. LDL-receptor class B repeat units follow at residues 1935-1977, 1978-2020, 2021-2064, and 2065-2108; these read DTIY…DWIA, GNIY…HPEK, GYLF…DYQG, and GKLY…FEDF. Asn-1996 is a glycosylation site (N-linked (GlcNAc...) asparagine). The residue at position 2010 (Lys-2010) is an N6-acetyllysine. N-linked (GlcNAc...) asparagine glycosylation occurs at Asn-2049. N-linked (GlcNAc...) asparagine glycans are attached at residues Asn-2118 and Asn-2128. Residues 2156-2196 form the EGF-like 9 domain; it reads GTNVCAVANGGCQQLCLYRGGGQRACACAHGMLAEDGASCR. 3 cysteine pairs are disulfide-bonded: Cys-2160-Cys-2171, Cys-2167-Cys-2181, and Cys-2183-Cys-2195. 5 LDL-receptor class B repeats span residues 2254–2295, 2296–2344, 2345–2389, 2390–2432, and 2433–2474; these read NRIF…HRGW, DTLY…DECQ, NLMF…DHRA, EKLY…YGEH, and IFWT…VAND. N-linked (GlcNAc...) asparagine glycosylation occurs at Asn-2473. Residues 2479-2519 enclose the EGF-like 10 domain; it reads ELSPCRINNGGCQDLCLLTHQGHVNCSCRGGRILQEDFTCR. Disulfide bonds link Cys-2483–Cys-2494, Cys-2490–Cys-2504, and Cys-2506–Cys-2518. Asn-2503 carries N-linked (GlcNAc...) asparagine glycosylation. N-linked (GlcNAc...) asparagine glycosylation occurs at Asn-2522. LDL-receptor class A domains lie at 2523–2564, 2565–2603, 2604–2642, 2643–2691, 2695–2733, 2733–2772, and 2773–2815; these read SSCR…YCNS, RRCK…PCNK, TACG…NCSA, TDCS…DCPG, PRCP…HCNK, KFCS…HCEG, and KTCG…GCLY. 6 cysteine pairs are disulfide-bonded: Cys-2525-Cys-2538, Cys-2533-Cys-2551, Cys-2545-Cys-2562, Cys-2567-Cys-2579, Cys-2574-Cys-2592, and Cys-2586-Cys-2601. An N-linked (GlcNAc...) asparagine glycan is attached at Asn-2602. Disulfide bonds link Cys-2606-Cys-2618, Cys-2613-Cys-2631, Cys-2625-Cys-2640, Cys-2645-Cys-2667, Cys-2661-Cys-2680, Cys-2674-Cys-2689, Cys-2697-Cys-2709, Cys-2704-Cys-2722, Cys-2716-Cys-2731, Cys-2735-Cys-2747, Cys-2742-Cys-2760, Cys-2754-Cys-2770, Cys-2775-Cys-2788, Cys-2782-Cys-2801, and Cys-2795-Cys-2813. N-linked (GlcNAc...) asparagine glycosylation is found at Asn-2621 and Asn-2639. Asn-2816 is a glycosylation site (N-linked (GlcNAc...) asparagine). LDL-receptor class A domains lie at 2817–2856, 2857–2900, and 2903–2941; these read STCD…ECEY, PTCG…HCTS, and HKCN…RGCH. 15 cysteine pairs are disulfide-bonded: Cys-2819-Cys-2831, Cys-2826-Cys-2844, Cys-2838-Cys-2854, Cys-2859-Cys-2871, Cys-2866-Cys-2885, Cys-2879-Cys-2898, Cys-2905-Cys-2918, Cys-2913-Cys-2931, Cys-2925-Cys-2940, Cys-2945-Cys-2957, Cys-2953-Cys-2966, Cys-2968-Cys-2981, Cys-2987-Cys-2997, Cys-2993-Cys-3006, and Cys-3008-Cys-3022. Residue Asn-2906 is glycosylated (N-linked (GlcNAc...) asparagine). The EGF-like 11 domain maps to 2942 to 2982; that stretch reads VNECLSRKLSGCSQDCEDLKIGFKCRCRPGFRLKDDGRTCA. Positions 2983–3023 constitute an EGF-like 12; calcium-binding domain; it reads DLDECSTTFPCSQLCINTHGSYKCLCVEGYAPRGGDPHSCK. Asn-3049 and Asn-3090 each carry an N-linked (GlcNAc...) asparagine glycan. LDL-receptor class B repeat units lie at residues 3070-3114, 3115-3157, 3158-3201, 3202-3244, and 3245-3285; these read QMIY…DWVG, GNLY…DVQN, GYLY…DYVT, ERIY…FEDY, and VYWT…FHAL. Asn-3265 carries N-linked (GlcNAc...) asparagine glycosylation. The EGF-like 13 domain occupies 3291–3332; sequence PNHPCKVNNGGCSNLCLLSPGGGHKCACPTNFYLGGDGRTCV. Intrachain disulfides connect Cys-3295/Cys-3306, Cys-3302/Cys-3316, and Cys-3318/Cys-3331. LDL-receptor class A domains lie at 3333 to 3372, 3373 to 3411, 3412 to 3451, 3452 to 3492, 3493 to 3534, 3535 to 3573, 3574 to 3612, 3612 to 3650, 3653 to 3693, 3694 to 3734, and 3740 to 3779; these read SNCT…DCPE, FKCR…NCDI, HVCL…DCPE, VTCA…NCTQ, MTCG…ECDE, RTCE…SCTP, RPCS…DCTP, PRCD…ACGT, RTCP…ECAR, FICP…DCEP, and PHCK…DCSI. N-linked (GlcNAc...) asparagine glycosylation is present at Asn-3334. 39 disulfides stabilise this stretch: Cys-3335-Cys-3347, Cys-3342-Cys-3360, Cys-3354-Cys-3370, Cys-3375-Cys-3387, Cys-3382-Cys-3400, Cys-3394-Cys-3409, Cys-3414-Cys-3427, Cys-3421-Cys-3440, Cys-3434-Cys-3449, Cys-3454-Cys-3467, Cys-3461-Cys-3480, Cys-3474-Cys-3490, Cys-3495-Cys-3508, Cys-3502-Cys-3521, Cys-3515-Cys-3532, Cys-3537-Cys-3549, Cys-3544-Cys-3562, Cys-3556-Cys-3571, Cys-3576-Cys-3588, Cys-3583-Cys-3601, Cys-3595-Cys-3610, Cys-3614-Cys-3626, Cys-3621-Cys-3639, Cys-3633-Cys-3648, Cys-3655-Cys-3667, Cys-3662-Cys-3680, Cys-3674-Cys-3691, Cys-3696-Cys-3710, Cys-3704-Cys-3723, Cys-3717-Cys-3732, Cys-3742-Cys-3755, Cys-3750-Cys-3768, Cys-3762-Cys-3777, Cys-3786-Cys-3799, Cys-3793-Cys-3808, Cys-3810-Cys-3823, Cys-3829-Cys-3839, Cys-3835-Cys-3848, and Cys-3850-Cys-3861. An N-linked (GlcNAc...) asparagine glycan is attached at Asn-3489. An N-linked (GlcNAc...) asparagine glycan is attached at Asn-3663. 2 EGF-like domains span residues 3782–3824 and 3825–3862; these read KLTS…PGCQ and DINE…NTCK. A glycan (N-linked (GlcNAc...) asparagine) is linked at Asn-3789. Residue Asn-3840 is glycosylated (N-linked (GlcNAc...) asparagine). 4 LDL-receptor class B repeats span residues 3913–3955, 3971–4013, 4014–4057, and 4058–4102; these read GRVY…HLNI, GNVY…DPLR, GTMY…DYHN, and ERLY…FEDY. The Recognition site for proteolytical processing signature appears at 3941 to 3944; sequence RHRR. N-linked (GlcNAc...) asparagine glycosylation occurs at Asn-3954. N-linked (GlcNAc...) asparagine glycans are attached at residues Asn-4076 and Asn-4126. EGF-like domains lie at 4148-4184, 4197-4233, 4233-4269, 4269-4305, 4305-4341, 4341-4376, and 4374-4410; these read VTNP…GTCV, RPGT…DKCE, ELDQ…PKCT, TAQV…DRCQ, QYRQ…PRCE, EVNK…PSCL, and SCLT…PRCE. Disulfide bonds link Cys-4152–Cys-4161, Cys-4157–Cys-4170, Cys-4172–Cys-4183, Cys-4201–Cys-4211, Cys-4205–Cys-4221, Cys-4223–Cys-4232, Cys-4237–Cys-4247, Cys-4241–Cys-4257, Cys-4259–Cys-4268, Cys-4273–Cys-4283, Cys-4277–Cys-4293, Cys-4295–Cys-4304, Cys-4309–Cys-4319, Cys-4313–Cys-4329, Cys-4331–Cys-4340, Cys-4345–Cys-4353, and Cys-4348–Cys-4364. Asn-4180 carries N-linked (GlcNAc...) asparagine glycosylation. Asn-4279 and Asn-4280 each carry an N-linked (GlcNAc...) asparagine glycan. Asn-4365 carries N-linked (GlcNAc...) asparagine glycosylation. Disulfide bonds link Cys-4366–Cys-4375, Cys-4378–Cys-4388, Cys-4382–Cys-4398, and Cys-4400–Cys-4409. The chain crosses the membrane as a helical span at residues 4425-4445; it reads ILIPLLLLLLLLLVAGVVFWY. The Cytoplasmic segment spans residues 4446–4545; that stretch reads KRRVRGAKGF…PEDEIGDPLA (100 aa). The segment at 4446–4545 is interaction with MAFB; it reads KRRVRGAKGF…PEDEIGDPLA (100 aa). Phosphothreonine is present on Thr-4461. The NPXY motif signature appears at 4503-4508; the sequence is FTNPVY. Residue Tyr-4508 is modified to Phosphotyrosine. 3 positions are modified to phosphoserine: Ser-4518, Ser-4521, and Ser-4524.

It belongs to the LDLR family. In terms of assembly, heterodimer of an 85-kDa membrane-bound carboxyl subunit and a non-covalently attached 515-kDa N-terminal subunit. Intracellular domain interacts with MAFB. Found in a complex with PID1/PCLI1, LRP1 and CUBNI. Interacts with SNX17, PID1/PCLI1, PDGF and CUBN. The intracellular domain interacts with SHC1, GULP1 and DAB1. Can weakly interact (via NPXY motif) with DAB2 (via PID domain); the interaction is enhanced by tyrosine phosphorylation of the NPXY motif. Interacts with MDK; promotes neuronal survival. Interacts with LRPAP1; this interaction is followed by rapid internalization. Interacts with uPA/PLAU and PAI1/SERPINE1, either individually or in complex with each other, leading to rapid endocytosis; this interaction is abolished in the presence of LRPAP1/RAP. Also interacts with tPA/PLAT alone or in complex with SERPINE1. Interacts with the urokinase receptor PLAUR; this interaction leads to PLAUR internalization and is impaired in the presence of SORL1. Interacts with PDGFB. Interacts with TAU/MAPT, leading to endocytosis; this interaction is reduced in the presence of LRPAP1/RAP. Interacts with IGFBP3. Interacts with ADGRG6. In terms of processing, phosphorylated on serine and threonine residues. Phosphorylated on tyrosine residues upon stimulation with PDGF. Tyrosine phosphorylation promotes interaction with SHC1. Post-translationally, cleaved into a 85 kDa membrane-spanning subunit (LRP-85) and a 515 kDa large extracellular domain (LRP-515) that remains non-covalently associated. Gamma-secretase-dependent cleavage of LRP-85 releases the intracellular domain from the membrane.

The protein resides in the cell membrane. It localises to the membrane. Its subcellular location is the coated pit. The protein localises to the golgi outpost. It is found in the cytoplasm. The protein resides in the cytoskeleton. It localises to the microtubule organizing center. Its subcellular location is the nucleus. In terms of biological role, endocytic receptor involved in endocytosis and in phagocytosis of apoptotic cells. Required for early embryonic development. Involved in cellular lipid homeostasis. Involved in the plasma clearance of chylomicron remnants and activated LRPAP1 (alpha 2-macroglobulin), as well as the local metabolism of complexes between plasminogen activators and their endogenous inhibitors. Acts as an alpha-2-macroglobulin receptor. Acts as a TAU/MAPT receptor and controls the endocytosis of TAU/MAPT as well as its subsequent spread. May modulate cellular events, such as APP metabolism, kinase-dependent intracellular signaling, neuronal calcium signaling as well as neurotransmission. Also acts as a receptor for IGFBP3 to mediate cell growth inhibition. Its function is as follows. (Microbial infection) Functions as a receptor for Vibrio cholerae cholix toxin and for Pseudomonas aeruginosa exotoxin A. This Mus musculus (Mouse) protein is Prolow-density lipoprotein receptor-related protein 1.